The following is a 158-amino-acid chain: MQGYLSAWLVKHGLIHRSLGFDYQGIETFQIKSEDWHSIAVILYVYGYNYLRSQCAYDVAPGGLLASVYHLTRIKYGVDQPEEVCIKVFATRRDPRIPSVFCVWKSVDFQERESYDMLGISYDNHPRLKRILMPDSWIGWPLRKDYIAPNFYEIQDAH.

Belongs to the complex I 30 kDa subunit family. As to quaternary structure, NDH is composed of at least 16 different subunits, 5 of which are encoded in the nucleus.

It is found in the plastid. The protein localises to the chloroplast thylakoid membrane. It catalyses the reaction a plastoquinone + NADH + (n+1) H(+)(in) = a plastoquinol + NAD(+) + n H(+)(out). The catalysed reaction is a plastoquinone + NADPH + (n+1) H(+)(in) = a plastoquinol + NADP(+) + n H(+)(out). Its function is as follows. NDH shuttles electrons from NAD(P)H:plastoquinone, via FMN and iron-sulfur (Fe-S) centers, to quinones in the photosynthetic chain and possibly in a chloroplast respiratory chain. The immediate electron acceptor for the enzyme in this species is believed to be plastoquinone. Couples the redox reaction to proton translocation, and thus conserves the redox energy in a proton gradient. The sequence is that of NAD(P)H-quinone oxidoreductase subunit J, chloroplastic from Trachelium caeruleum (Blue throatwort).